The chain runs to 180 residues: Large ribosomal subunit protein uL5 (180 aa).

This sequence belongs to the universal ribosomal protein uL5 family. In terms of assembly, part of the 50S ribosomal subunit; part of the 5S rRNA/L5/L18/L25 subcomplex. Contacts the 5S rRNA and the P site tRNA. Forms a bridge to the 30S subunit in the 70S ribosome.

Functionally, this is one of the proteins that bind and probably mediate the attachment of the 5S RNA into the large ribosomal subunit, where it forms part of the central protuberance. In the 70S ribosome it contacts protein S13 of the 30S subunit (bridge B1b), connecting the 2 subunits; this bridge is implicated in subunit movement. Contacts the P site tRNA; the 5S rRNA and some of its associated proteins might help stabilize positioning of ribosome-bound tRNAs. This Mycoplasma pneumoniae (strain ATCC 29342 / M129 / Subtype 1) (Mycoplasmoides pneumoniae) protein is Large ribosomal subunit protein uL5.